Reading from the N-terminus, the 352-residue chain is Uroporphyrinogen decarboxylase (352 aa).

Substrate-binding positions include 27 to 31 (RQAGR), aspartate 77, tyrosine 154, threonine 209, and histidine 325.

This sequence belongs to the uroporphyrinogen decarboxylase family. As to quaternary structure, homodimer.

It localises to the cytoplasm. The enzyme catalyses uroporphyrinogen III + 4 H(+) = coproporphyrinogen III + 4 CO2. The protein operates within porphyrin-containing compound metabolism; protoporphyrin-IX biosynthesis; coproporphyrinogen-III from 5-aminolevulinate: step 4/4. Functionally, catalyzes the decarboxylation of four acetate groups of uroporphyrinogen-III to yield coproporphyrinogen-III. The protein is Uroporphyrinogen decarboxylase of Legionella pneumophila (strain Corby).